Reading from the N-terminus, the 393-residue chain is NAD(P)H-quinone oxidoreductase subunit H, chloroplastic (393 aa).

Belongs to the complex I 49 kDa subunit family. In terms of assembly, NDH is composed of at least 16 different subunits, 5 of which are encoded in the nucleus.

It is found in the plastid. It localises to the chloroplast thylakoid membrane. The enzyme catalyses a plastoquinone + NADH + (n+1) H(+)(in) = a plastoquinol + NAD(+) + n H(+)(out). The catalysed reaction is a plastoquinone + NADPH + (n+1) H(+)(in) = a plastoquinol + NADP(+) + n H(+)(out). NDH shuttles electrons from NAD(P)H:plastoquinone, via FMN and iron-sulfur (Fe-S) centers, to quinones in the photosynthetic chain and possibly in a chloroplast respiratory chain. The immediate electron acceptor for the enzyme in this species is believed to be plastoquinone. Couples the redox reaction to proton translocation, and thus conserves the redox energy in a proton gradient. This chain is NAD(P)H-quinone oxidoreductase subunit H, chloroplastic, found in Panax ginseng (Korean ginseng).